The primary structure comprises 719 residues: ATP-dependent RNA helicase p62 (719 aa).

Residues 94–234 (AQSQRAFRDS…GSQDLPMRPV (141 aa)) form a disordered region. Basic and acidic residues-rich tracts occupy residues 99–108 (AFRDSSKPDS) and 137–171 (EEIK…DRRG). Gly residues predominate over residues 172 to 188 (GGGGGNRFGGGGGGGDY). Over residues 194 to 205 (GRVEKRRDDRGG) the composition is skewed to basic and acidic residues. A compositionally biased stretch (gly residues) spans 206-226 (GNRFGGGGGFGDRRGGGGGGS). A Q motif motif is present at residues 281–309 (QDFSEVHLPDYVMKEIRRQGYKAPTAIQA). The region spanning 312–487 (WPIAMSGSNF…EDFLGNYIQI (176 aa)) is the Helicase ATP-binding domain. 325 to 332 (AKTGSGKT) lines the ATP pocket. Positions 435–438 (DEAD) match the DEAD box motif. A Helicase C-terminal domain is found at 519–664 (LLSDIYDTSE…EINPALENLA (146 aa)). The segment at 689–719 (GGGFKKGSLSNGRGFGGGGGGGGEGRHSRFD) is disordered. Over residues 701-711 (RGFGGGGGGGG) the composition is skewed to gly residues.

The protein belongs to the DEAD box helicase family. DDX5/DBP2 subfamily. Interacts with Fmr1 to form the RNA-induced silencing complex (RISC), a ribonucleoprotein (RNP) complex involved in translation regulation, other components of the complex are RpL5, RpL11, AGO2 and Dcr-1.

It localises to the nucleus. Its subcellular location is the nucleolus. The protein resides in the cytoplasm. It is found in the cytosol. The enzyme catalyses ATP + H2O = ADP + phosphate + H(+). In terms of biological role, as an RNA helicase, unwinds RNA and alters RNA structures through ATP binding and hydrolysis. Involved in multiple cellular processes, including pre-mRNA splicing, alternative splicing, rRNA processing and miRNA processing, as well as transcription regulation. Plays a role in innate immunity. Specifically restricts bunyavirus infection, including Rift Valley fever virus (RVFV) or La Crosse virus (LACV), but not vesicular stomatitis virus (VSV), in an interferon- and DROSHA-independent manner. This chain is ATP-dependent RNA helicase p62 (Rm62), found in Drosophila melanogaster (Fruit fly).